Here is a 431-residue protein sequence, read N- to C-terminus: Serine hydroxymethyltransferase (431 aa).

121 to 123 (AHV) provides a ligand contact to (6S)-5,6,7,8-tetrahydrofolate. K227 bears the N6-(pyridoxal phosphate)lysine mark.

The protein belongs to the SHMT family. Homodimer. The cofactor is pyridoxal 5'-phosphate.

The protein resides in the cytoplasm. It functions in the pathway amino-acid biosynthesis; glycine biosynthesis; glycine from L-serine: step 1/1. In terms of biological role, catalyzes the reversible interconversion of serine and glycine with a modified folate serving as the one-carbon carrier. Also exhibits a pteridine-independent aldolase activity toward beta-hydroxyamino acids, producing glycine and aldehydes, via a retro-aldol mechanism. In Metallosphaera sedula (strain ATCC 51363 / DSM 5348 / JCM 9185 / NBRC 15509 / TH2), this protein is Serine hydroxymethyltransferase.